The sequence spans 145 residues: Extracellular globin-2 (145 aa).

In terms of domain architecture, Globin spans Gln3–His145. Cys4 and Cys133 are joined by a disulfide. His96 contacts heme b.

This sequence belongs to the globin family. The extracellular hemoglobin of the earthworm consists of 12 subunits that have a hexagonal bilayer structure with a molecular weight near 3.8 million. Each one-twelfth subunit is composed primarily of disulfide linked trimers (chains A, B, and C) and monomers (chain D).

The sequence is that of Extracellular globin-2 from Lumbricus terrestris (Common earthworm).